We begin with the raw amino-acid sequence, 342 residues long: UDP-3-O-acylglucosamine N-acyltransferase (342 aa).

The active-site Proton acceptor is the His-243.

The protein belongs to the transferase hexapeptide repeat family. LpxD subfamily. In terms of assembly, homotrimer.

The enzyme catalyses a UDP-3-O-[(3R)-3-hydroxyacyl]-alpha-D-glucosamine + a (3R)-hydroxyacyl-[ACP] = a UDP-2-N,3-O-bis[(3R)-3-hydroxyacyl]-alpha-D-glucosamine + holo-[ACP] + H(+). The protein operates within bacterial outer membrane biogenesis; LPS lipid A biosynthesis. Catalyzes the N-acylation of UDP-3-O-acylglucosamine using 3-hydroxyacyl-ACP as the acyl donor. Is involved in the biosynthesis of lipid A, a phosphorylated glycolipid that anchors the lipopolysaccharide to the outer membrane of the cell. In Coxiella burnetii (strain CbuK_Q154) (Coxiella burnetii (strain Q154)), this protein is UDP-3-O-acylglucosamine N-acyltransferase.